The sequence spans 411 residues: MVVINNVKMACMKCIRGHRSSTCKHNDRELFPIRPKGRPISQCEKCRIARITRHLHVKCTCNSRKKGSKCSTSSTTDLDSSSASNSSCSIPSSISEKLLPRDNVKTHCPKRSASCCGKKPDVMPLKINLESQTDFMGMPLQSQRPHSESYRMLPEPEKFKSEYGYPSQFLPIEKLTSNVAYPPNYNNYLKSPYQQPTNFPPEIQYNYSHSPQHSIQEAEEAAVYGPPVYRSGYQILYNNNTDSIAAAAATHDLYPQPDVPLTFAMLADGNYVPLPSSTNTYGPSNSYGYEININESTNHVDSSYLPHPIQLSNYFTLPSSCAQADAACQCGDNCECLGCLTHPNNATTLAALNHISALEKETISHTDLHHTFKHEVNSSNNYELTNDELAASSPLYTSSSVPPSHITTGST.

The copper-fist DNA-binding region spans 1-40 (MVVINNVKMACMKCIRGHRSSTCKHNDRELFPIRPKGRPI). Zn(2+) is bound by residues C11, C14, C23, and H25. The segment at 63–92 (SRKKGSKCSTSSTTDLDSSSASNSSCSIPS) is disordered. The span at 69–92 (KCSTSSTTDLDSSSASNSSCSIPS) shows a compositional bias: low complexity.

The protein resides in the cytoplasm. Its subcellular location is the nucleus. In terms of biological role, copper-sensing transcription factor that regulates iron uptake genes. Under copper starvation conditions activates the transcription of the copper transport genes, ctr4, ctr5 and ctr6. The sequence is that of Metal-binding regulatory protein cuf1 (cuf1) from Schizosaccharomyces pombe (strain 972 / ATCC 24843) (Fission yeast).